We begin with the raw amino-acid sequence, 578 residues long: NADPH oxidase 4 (578 aa).

The Cytoplasmic segment spans residues 1 to 16 (MAVSWRSWLANEGVKH). A helical membrane pass occupies residues 17–37 (LCLLIWLSLNVLLFWKTFLLY). At 38 to 62 (NQGPEYYYIHQMLGLGLCLSRASAS) the chain is on the extracellular side. The region spanning 58 to 303 (RASASVLNLN…YCAERLYRCI (246 aa)) is the Ferric oxidoreductase domain. A helical membrane pass occupies residues 63-83 (VLNLNCSLILLPMCRTVLAYL). Topologically, residues 84–104 (RGSQKVPSRRTRRLLDKSKTL) are cytoplasmic. Residues 105-125 (HITCGVTICIFSGVHVAAHLV) traverse the membrane as a helical segment. The Extracellular segment spans residues 126-154 (NALNFSVNYSEDFLELNAARYQNEDPRKL). An N-linked (GlcNAc...) asparagine glycan is attached at Asn-133. A helical membrane pass occupies residues 155-175 (LFTTIPGLTGVCMVVVLFLMV). The Cytoplasmic portion of the chain corresponds to 176–188 (TASTYAIRVSNYD). The chain crosses the membrane as a helical span at residues 189–209 (IFWYTHNLFFVFYMLLLLHVS). Topologically, residues 210–424 (GGLLKYQTNV…SPFEESLNYE (215 aa)) are extracellular. The tract at residues 218–273 (NVDTHPPGCISLNQTSSQNMSIPDYVSEHFHGSLPRGFSKLEDRYQKTLVKICLEE) is E-loop; essential for H2O2 generating catalytic activity. Asn-230 carries N-linked (GlcNAc...) asparagine glycosylation. The mediates interaction with TLR4 stretch occupies residues 248–575 (HGSLPRGFSK…YGTKFEYNKE (328 aa)). Positions 304–419 (RSNKPVTIIS…DGPFGSPFEE (116 aa)) constitute an FAD-binding FR-type domain. A helical membrane pass occupies residues 425–445 (VSLCVAGGIGVTPFASILNTL). Topologically, residues 446–578 (LDDWKPYKLR…KFEYNKESFS (133 aa)) are cytoplasmic.

As to quaternary structure, interacts with, relocalizes and stabilizes CYBA/p22phox. Interacts with TLR4. Interacts with protein disulfide isomerase. Interacts with PPP1R15A. Interacts with LRRC8A; this interaction prevents the ubiquitin-mediated degradation of LRRC8A. Requires heme as cofactor. In terms of processing, N-glycosylation is required for the function. EXpressed in brain, in all layers of the cerebellum, in pyramidal cells of the Ammon horn and in Purkinje cells (at protein level). Expressed in osteoclasts, leukocytes, kidney, liver and lung.

The protein resides in the cytoplasm. It localises to the endoplasmic reticulum membrane. The protein localises to the cell membrane. It is found in the cell junction. Its subcellular location is the focal adhesion. The protein resides in the nucleus. The enzyme catalyses NADPH + 2 O2 = 2 superoxide + NADP(+) + H(+). The catalysed reaction is NADPH + O2 + H(+) = H2O2 + NADP(+). Its activity is regulated as follows. Activated by insulin. Inhibited by diphenylene iodonium. Inhibited by plumbagin. Activated by phorbol 12-myristate 13-acetate (PMA). Functionally, NADPH oxidase that catalyzes predominantly the reduction of oxygen to H2O2. Can also catalyze to a smaller extent, the reduction of oxygen to superoxide. May function as an oxygen sensor regulating the KCNK3/TASK-1 potassium channel and HIF1A activity. May regulate insulin signaling cascade. May play a role in apoptosis, bone resorption and lipolysaccharide-mediated activation of NFKB. May produce superoxide in the nucleus and play a role in regulating gene expression upon cell stimulation. Promotes ferroptosis, reactive oxygen species production and reduced glutathione (GSH) levels by activating NLRP3 inflammasome activation and cytokine release. The chain is NADPH oxidase 4 (Nox4) from Mus musculus (Mouse).